A 191-amino-acid chain; its full sequence is Large ribosomal subunit protein bL9 (191 aa).

A disordered region spans residues alanine 151–glutamate 191.

The protein belongs to the bacterial ribosomal protein bL9 family.

In terms of biological role, binds to the 23S rRNA. The chain is Large ribosomal subunit protein bL9 from Sinorhizobium medicae (strain WSM419) (Ensifer medicae).